Consider the following 466-residue polypeptide: Vimentin (466 aa).

Composition is skewed to low complexity over residues 1 to 13 and 20 to 33; these read MSTRSVSSSSYRR and TSSRPSSNRSYVTT. Residues 1-33 are disordered; that stretch reads MSTRSVSSSSYRRMFGGSGTSSRPSSNRSYVTT. The residue at position 2 (serine 2) is an N-acetylserine. The tract at residues 2 to 95 is head; it reads STRSVSSSSY…FSLADAINTE (94 aa). Serine 5 carries the phosphoserine modification. A Phosphoserine; by PKA and PKC; alternate modification is found at serine 7. Serine 7 is a glycosylation site (O-linked (GlcNAc) serine; alternate). Position 8 is a phosphoserine (serine 8). A phosphoserine; by PKC mark is found at serine 9 and serine 10. Threonine 20 bears the Phosphothreonine mark. A phosphoserine mark is found at serine 25 and serine 26. Residue threonine 33 is glycosylated (O-linked (GlcNAc) threonine). An O-linked (GlcNAc) serine; alternate glycan is attached at serine 34. Phosphoserine; by PKC; alternate is present on serine 34. Residue serine 39 is modified to Phosphoserine; by CaMK2, PKA, PKC and ROCK2. Residue serine 42 is modified to Phosphoserine; by PKC. Serine 47 carries the post-translational modification Phosphoserine; by PKA. 2 positions are modified to phosphoserine: serine 49 and serine 51. Tyrosine 53 is subject to Phosphotyrosine. Phosphoserine occurs at positions 55 and 56. The residue at position 61 (tyrosine 61) is a Phosphotyrosine. At serine 66 the chain carries Phosphoserine; by PKA and PKC. Serine 72 carries the phosphoserine; by AURKB and ROCK2 modification. A phosphoserine mark is found at serine 73, serine 83, and serine 87. Residues 96–131 are coil 1A; the sequence is FKNTRTNEKVELQELNDRFANYIDKVRFLEQQNKIL. The stretch at 96-131 forms a coiled coil; that stretch reads FKNTRTNEKVELQELNDRFANYIDKVRFLEQQNKIL. In terms of domain architecture, IF rod spans 103-411; the sequence is EKVELQELND…KLLEGEESRI (309 aa). Residue lysine 104 forms a Glycyl lysine isopeptide (Lys-Gly) (interchain with G-Cter in SUMO2) linkage. Tyrosine 117 bears the Phosphotyrosine mark. N6-acetyllysine; alternate occurs at positions 120, 129, and 139. An N6-succinyllysine; alternate mark is found at lysine 120 and lysine 129. Residues lysine 120, lysine 129, and lysine 139 each participate in a glycyl lysine isopeptide (Lys-Gly) (interchain with G-Cter in SUMO2); alternate cross-link. Residues 132 to 153 are linker 1; it reads LAELEQLKGQGKSRLGDLYEEE. At serine 144 the chain carries Phosphoserine. Residues 154–245 adopt a coiled-coil conformation; that stretch reads MRELRRQVDQ…KLHDEEIQEL (92 aa). The tract at residues 154–245 is coil 1B; sequence MRELRRQVDQ…KLHDEEIQEL (92 aa). N6-acetyllysine is present on lysine 168. Lysine 188 bears the N6-acetyllysine; alternate mark. The residue at position 188 (lysine 188) is an N6-succinyllysine; alternate. Phosphoserine is present on serine 214. Lysine 223 is subject to N6-acetyllysine; alternate. A Glycyl lysine isopeptide (Lys-Gly) (interchain with G-Cter in SUMO2); alternate cross-link involves residue lysine 223. Position 226 is a phosphoserine (serine 226). Lysine 235 carries the N6-acetyllysine modification. A linker 12 region spans residues 246–268; the sequence is QAQIQEQHVQIDVDVSKPDLTAA. Lysine 262 is covalently cross-linked (Glycyl lysine isopeptide (Lys-Gly) (interchain with G-Cter in SUMO2)). The tract at residues 269–407 is coil 2; sequence LRDVRQQYES…ATYRKLLEGE (139 aa). Lysine 294 bears the N6-acetyllysine; alternate mark. N6-succinyllysine; alternate is present on lysine 294. Lysine 294 participates in a covalent cross-link: Glycyl lysine isopeptide (Lys-Gly) (interchain with G-Cter in SUMO2); alternate. Phosphoserine is present on serine 299. Positions 303–407 form a coiled coil; it reads NRNNDALRQA…ATYRKLLEGE (105 aa). Lysine 313 is covalently cross-linked (Glycyl lysine isopeptide (Lys-Gly) (interchain with G-Cter in SUMO2)). Serine 325 is subject to Phosphoserine. The short motif at 326–329 is the [IL]-x-C-x-x-[DE] motif element; it reads LTCE. Lysine 373 carries the N6-acetyllysine; alternate modification. Lysine 373 participates in a covalent cross-link: Glycyl lysine isopeptide (Lys-Gly) (interchain with G-Cter in SUMO2); alternate. A tail region spans residues 408–466; the sequence is ESRISLPLPNFSSLNLRETNLESLPLVDTHSKRTLLIKTVETRDGQVINETSQHHDDLE. Phosphoserine is present on residues serine 409, serine 412, serine 419, and serine 420. Residue threonine 426 is modified to Phosphothreonine. Serine 430 is modified (phosphoserine). Residue threonine 436 is modified to Phosphothreonine. Serine 438 carries the phosphoserine modification. Lysine 439 is covalently cross-linked (Glycyl lysine isopeptide (Lys-Gly) (interchain with G-Cter in SUMO2)). Lysine 445 is subject to N6-acetyllysine; alternate. Lysine 445 is subject to N6-succinyllysine; alternate. Lysine 445 participates in a covalent cross-link: Glycyl lysine isopeptide (Lys-Gly) (interchain with G-Cter in SUMO2); alternate. Lysine 445 is covalently cross-linked (Glycyl lysine isopeptide (Lys-Gly) (interchain with G-Cter in SUMO1); alternate). 2 positions are modified to phosphothreonine: threonine 446 and threonine 458. Serine 459 is subject to Phosphoserine.

Belongs to the intermediate filament family. Homomer assembled from elementary dimers. Identified in complexes that contain VIM, EZR, AHNAK, BFSP1, BFSP2, ANK2, PLEC, PRX and spectrin. Interacts with BCAS3. Interacts with LGSN. Interacts with SYNM. Interacts (via rod region) with PLEC (via CH 1 domain). Interacts with STK33. Interacts with LARP6. Interacts with RAB8B. Interacts with TOR1A; the interaction associates TOR1A with the cytoskeleton. Interacts with TOR1AIP1. Interacts with TOR1AIP1. Interacts with DIAPH1. Interacts with EPPK1; interaction is dependent of higher-order structure of intermediate filament. Interacts with the non-receptor tyrosine kinase SRMS; the interaction leads to phosphorylation of VIM. Interacts with NOD2. Interacts (via head region) with CORO1C. Interacts with HDGF. Interacts with PRKCE (via phorbol-ester/DAG-type 2 domain). Interacts with BFSP2. Interacts with PPL. Interacts with PKP1 and PKP2. Interacts with SCRIB (via PDZ domains); the interaction protects SCRIB from proteasomal degradation and facilitates SCRIB localization to intermediate filaments, the interaction is reduced by cell contact inhibition. Post-translationally, one of the most prominent phosphoproteins in various cells of mesenchymal origin. Phosphorylation is enhanced during cell division, at which time vimentin filaments are significantly reorganized. Phosphorylation by PKN1 inhibits the formation of filaments. Filament disassembly during mitosis is promoted by phosphorylation at Ser-55 as well as by nestin. Phosphorylated at Ser-56 by CDK5 during neutrophil secretion in the cytoplasm. Phosphorylated by STK33. Phosphorylated on tyrosine residues by SRMS. In terms of processing, S-nitrosylation is induced by interferon-gamma and oxidatively-modified low-densitity lipoprotein (LDL(ox)) possibly implicating the iNOS-S100A8/9 transnitrosylase complex.

Its subcellular location is the cytoplasm. The protein localises to the cytoskeleton. It is found in the nucleus matrix. The protein resides in the cell membrane. Its function is as follows. Vimentins are class-III intermediate filaments found in various non-epithelial cells, especially mesenchymal cells. Vimentin is attached to the nucleus, endoplasmic reticulum, and mitochondria, either laterally or terminally. Plays a role in cell directional movement, orientation, cell sheet organization and Golgi complex polarization at the cell migration front. Protects SCRIB from proteasomal degradation and facilitates its localization to intermediate filaments in a cell contact-mediated manner. In terms of biological role, involved with LARP6 in the stabilization of type I collagen mRNAs for CO1A1 and CO1A2. The sequence is that of Vimentin from Rattus norvegicus (Rat).